The following is an 878-amino-acid chain: Valine--tRNA ligase (878 aa).

Residues 45–55 (PNVTGQLHMGH) carry the 'HIGH' region motif. A 'KMSKS' region motif is present at residues 524–528 (KMSKS). Position 527 (K527) interacts with ATP. Positions 804 to 871 (PLKDLIDLEK…REKEVLEQRI (68 aa)) form a coiled coil.

This sequence belongs to the class-I aminoacyl-tRNA synthetase family. ValS type 1 subfamily. As to quaternary structure, monomer.

It is found in the cytoplasm. The enzyme catalyses tRNA(Val) + L-valine + ATP = L-valyl-tRNA(Val) + AMP + diphosphate. Its function is as follows. Catalyzes the attachment of valine to tRNA(Val). As ValRS can inadvertently accommodate and process structurally similar amino acids such as threonine, to avoid such errors, it has a 'posttransfer' editing activity that hydrolyzes mischarged Thr-tRNA(Val) in a tRNA-dependent manner. The sequence is that of Valine--tRNA ligase from Carboxydothermus hydrogenoformans (strain ATCC BAA-161 / DSM 6008 / Z-2901).